We begin with the raw amino-acid sequence, 420 residues long: MPLQVSDYSWQQTKTAVFLSLPLKGVCVRDTDVFCTENYLKVNFPPFLFEAFLYAPIDDESSKAKIGNDTIVFTLYKKEAAMWETLSVTGVDKEMMQRIREKSILQAQERAKEATEAKAAAKREDQKYALSVMMKIEEEERKKIEDMKENERIKATKELEAWKEYQRKAEEQKKIQREEKLCQKEKQIKEERKKIKYKSLTRNLASRNLAPKGRNSENIFTEKLKEDSIPAPRSVGSIKINFTPRVFPTALRESQVAEEEEWLHKQAEARRAMNTDIAELCDLKEEEKNPEWLKDKGNKLFATENYLAAINAYNLAIRLNNKMPLLYLNRAACHLKLKNLHKAIEDSSKALELLMPPVTDNANARMKAHVRRGTAFCQLELYVEGLQDYEAALKIDPSNKIVQIDAEKIRNVIQGTELKS.

The 85-residue stretch at 3-87 (LQVSDYSWQQ…KEAAMWETLS (85 aa)) folds into the CS domain. Positions 7–103 (DYSWQQTKTA…EMMQRIREKS (97 aa)) are mediates interaction with ESR1 and STUB1. TPR repeat units lie at residues 290–323 (PEWLKDKGNKLFATENYLAAINAYNLAIRLNNKM), 324–357 (PLLYLNRAACHLKLKNLHKAIEDSSKALELLMPP), and 366–399 (MKAHVRRGTAFCQLELYVEGLQDYEAALKIDPSN).

In terms of assembly, interacts with ZMYND10. Interacts with STUB1. Interacts with ESR1 and ESR2. Interacts with DNAAF2. Interacts with CCT3, CCT4, CCT5 and CCT8. Interacts with DNAAF6/PIH1D3.

Its subcellular location is the nucleus. The protein localises to the cytoplasm. The protein resides in the cell projection. It is found in the neuron projection. It localises to the dynein axonemal particle. In terms of biological role, involved in neuronal migration during development of the cerebral neocortex. May regulate the stability and proteasomal degradation of the estrogen receptors that play an important role in neuronal differentiation, survival and plasticity. Axonemal dynein assembly factor required for ciliary motility. The polypeptide is Dynein axonemal assembly factor 4 (Pan paniscus (Pygmy chimpanzee)).